We begin with the raw amino-acid sequence, 143 residues long: Heat shock protein Hsp-16.41 (143 aa).

The sHSP domain maps to 35–140 (HNSFNFSDNI…SSRSIPINFV (106 aa)).

This sequence belongs to the small heat shock protein (HSP20) family.

The chain is Heat shock protein Hsp-16.41 (hsp-16.41) from Caenorhabditis elegans.